The primary structure comprises 246 residues: Putative pectinesterase 57 (246 aa).

Asn-127 and Asn-143 each carry an N-linked (GlcNAc...) asparagine glycan. Thr-152 is a binding site for substrate. The N-linked (GlcNAc...) asparagine glycan is linked to Asn-174. Catalysis depends on Asp-205, which acts as the Proton donor. The active-site Nucleophile is Asp-226.

Belongs to the pectinesterase family.

It catalyses the reaction [(1-&gt;4)-alpha-D-galacturonosyl methyl ester](n) + n H2O = [(1-&gt;4)-alpha-D-galacturonosyl](n) + n methanol + n H(+). It functions in the pathway glycan metabolism; pectin degradation; 2-dehydro-3-deoxy-D-gluconate from pectin: step 1/5. In terms of biological role, acts in the modification of cell walls via demethylesterification of cell wall pectin. The chain is Putative pectinesterase 57 (PME57) from Arabidopsis thaliana (Mouse-ear cress).